The following is a 1199-amino-acid chain: Putative mitoferrin (1199 aa).

The chain crosses the membrane as a helical span at residues V32 to M52. N-linked (GlcNAc...) asparagine glycosylation is found at N92, N171, N208, N268, N326, N353, N443, N499, N539, N649, N708, N715, and N723. The chain crosses the membrane as a helical span at residues G730–E750. 2 N-linked (GlcNAc...) asparagine glycosylation sites follow: N763 and N772. The stretch at L792–I873 is one Solcar 1 repeat. The next 2 membrane-spanning stretches (helical) occupy residues F795 to I815 and L845 to C865. N914, N922, N965, N1013, N1022, N1041, and N1056 each carry an N-linked (GlcNAc...) asparagine glycan. Residues S1109–F1191 form a Solcar 2 repeat. A helical membrane pass occupies residues F1111–I1131.

Belongs to the mitochondrial carrier (TC 2.A.29) family.

The protein localises to the mitochondrion membrane. Putative iron transporter. In Plasmodium falciparum (isolate 3D7), this protein is Putative mitoferrin.